We begin with the raw amino-acid sequence, 208 residues long: Urease accessory protein UreG (208 aa).

Position 10–17 (Gly10–Thr17) interacts with GTP.

It belongs to the SIMIBI class G3E GTPase family. UreG subfamily. Homodimer. UreD, UreF and UreG form a complex that acts as a GTP-hydrolysis-dependent molecular chaperone, activating the urease apoprotein by helping to assemble the nickel containing metallocenter of UreC. The UreE protein probably delivers the nickel.

It localises to the cytoplasm. Functionally, facilitates the functional incorporation of the urease nickel metallocenter. This process requires GTP hydrolysis, probably effectuated by UreG. The polypeptide is Urease accessory protein UreG (Halalkalibacterium halodurans (strain ATCC BAA-125 / DSM 18197 / FERM 7344 / JCM 9153 / C-125) (Bacillus halodurans)).